The following is a 48-amino-acid chain: Entericidin B (48 aa).

Residues 1–21 form the signal peptide; sequence MVKKTIAAIFSVLVLSTVLTA. The N-palmitoyl cysteine moiety is linked to residue C22. A lipid anchor (S-diacylglycerol cysteine) is attached at C22.

It belongs to the EcnA/EcnB lipoprotein family.

It localises to the cell membrane. Functionally, plays a role in the bacteriolysis. Is activated under conditions of high osmolarity by the factor sigma S. Entericidin A functions as an antidote. The sequence is that of Entericidin B (ecnB) from Escherichia coli O157:H7.